Here is a 245-residue protein sequence, read N- to C-terminus: Haloacid dehalogenase-like hydrolase domain-containing protein At2g33255 (245 aa).

N-acetylalanine is present on T2. The active-site Nucleophile is the D39. The Mg(2+) site is built by D39, D41, and D186. The Proton donor role is filled by D41.

This sequence belongs to the HAD-like hydrolase superfamily. DOG/GPP family. Requires Mg(2+) as cofactor.

The protein is Haloacid dehalogenase-like hydrolase domain-containing protein At2g33255 of Arabidopsis thaliana (Mouse-ear cress).